We begin with the raw amino-acid sequence, 2343 residues long: Coagulation factor VIII (2343 aa).

Residues 1 to 19 form the signal peptide; the sequence is MQVELYTCCFLCLLPFSLS. 2 consecutive Plastocyanin-like domains span residues 20–199 and 207–343; these read ATRK…LLVC and ERTQ…VDSC. The region spanning 20 to 343 is the F5/8 type A 1 domain; that stretch reads ATRKYYLGAV…MEAYVKVDSC (324 aa). Residues N233 and N253 are each glycosylated (N-linked (GlcNAc...) asparagine). Y359 and Y408 each carry sulfotyrosine. Plastocyanin-like domains are found at residues 393-567 and 577-724; these read KTWV…LLIC and NQMM…VSSC. An F5/8 type A 2 domain is found at 393–724; it reads KTWVHYIAAE…MTALLKVSSC (332 aa). N595 carries an N-linked (GlcNAc...) asparagine glycan. Residues Y731, Y732, and Y736 each carry the sulfotyrosine modification. Over residues 752-761 the composition is skewed to polar residues; that stretch reads PRSFSQNSRH. Disordered stretches follow at residues 752–774 and 828–865; these read PRSFSQNSRHPSTKEKQLKATTT and ADDHSRGAIERNKGPPEVASLRPELRHSEDREFTPEPE. Residues 754 to 1659 form a b region; it reads SFSQNSRHPS…NPPVSKHHQR (906 aa). 2 stretches are compositionally biased toward basic and acidic residues: residues 828 to 841 and 850 to 861; these read ADDHSRGAIERNKG and PELRHSEDREFT. 11 N-linked (GlcNAc...) asparagine glycosylation sites follow: N877, N921, N937, N938, N956, N1007, N1019, N1037, N1062, N1069, and N1080. Positions 1124-1147 are disordered; that stretch reads GKNSLSSEQRPSPKQLTSLGSEKS. The segment covering 1125–1147 has biased composition (polar residues); it reads KNSLSSEQRPSPKQLTSLGSEKS. Residues N1179, N1193, N1275, N1290, N1308, N1341, N1391, N1419, N1429, N1453, N1547, and N1618 are each glycosylated (N-linked (GlcNAc...) asparagine). Residues 1302 to 1314 are compositionally biased toward polar residues; sequence TTRMSSNASQHVI. The tract at residues 1302 to 1326 is disordered; sequence TTRMSSNASQHVITQRGKRSLKQPR. The tract at residues 1592-1632 is disordered; the sequence is KSQKKSQTNTAFKRKDTILPLGPCENNDSTAAINEGQDKPQ. Sulfotyrosine is present on residues Y1675 and Y1691. 2 Plastocyanin-like domains span residues 1705 to 1869 and 1879 to 2032; these read KTRH…LLIC and GRQV…SKKC. Positions 1705-2032 constitute an F5/8 type A 3 domain; sequence KTRHYFIAAV…TLFLVYSKKC (328 aa). A glycan (N-linked (GlcNAc...) asparagine) is linked at N1821. F5/8 type C domains follow at residues 2032–2180 and 2185–2337; these read CQTP…LLGC and CSMP…VLGC. 2 disulfide bridges follow: C2032–C2180 and C2185–C2337. Residues N2129 and N2281 are each glycosylated (N-linked (GlcNAc...) asparagine).

This sequence belongs to the multicopper oxidase family. Interacts with vWF. vWF binding is essential for the stabilization of F8 in circulation. Post-translationally, proteolytically cleaved by cathepsin CTSG to produce a partially activated form.

It localises to the secreted. It is found in the extracellular space. Factor VIII, along with calcium and phospholipid, acts as a cofactor for factor IXa when it converts factor X to the activated form, factor Xa. This Canis lupus familiaris (Dog) protein is Coagulation factor VIII (F8).